The chain runs to 136 residues: Large ribosomal subunit protein bL17 (136 aa).

The protein belongs to the bacterial ribosomal protein bL17 family. Part of the 50S ribosomal subunit. Contacts protein L32.

The polypeptide is Large ribosomal subunit protein bL17 (Rickettsia africae (strain ESF-5)).